The sequence spans 479 residues: MAQHAVYFPDAFLTQMREAMPSTLSFDEFISACQRPLRRSIRINTLKISVADFLALIAPYGWSLTPIPWCHEGFWIERDDEEALPLGSTAEHLSGLFYIQEASSMLPVAALFADDNHPQRVMDMAAAPGSKTTQIAARMGNRGAILANEFSASRVKVLHANISRCGIANTALTHFDGRVFGAALPEMFDAILLDAPCSGEGVVRKDPDALKNWSPESNLDIAATQRELLDSAFHALRPGGTLVYSTCTLNRQENEAVCLWLKETYADAVEFLPLGDLFPDADRALTPEGFLHVFPQIYDCEGFFVARLRKMSSLPAMPAPGYKVGAFPFTPLKGREALHVTQAANAVGLLWDENLHLWQREKEVWLFPAEIESLIGKVRFSRLGIKLAESHNKGYRWQHEATIALACPTHAHAFELSVQEAEEWYRGRDIYPQTPPAADDVLVTFQHQPLGLAKRIGSRIKNSYPRELVRDGKLFTGNS.

S-adenosyl-L-methionine-binding positions include 125–131 (AAAPGSK), glutamate 149, aspartate 176, and aspartate 194. Cysteine 247 (nucleophile) is an active-site residue.

Belongs to the class I-like SAM-binding methyltransferase superfamily. RsmB/NOP family.

The protein localises to the cytoplasm. The enzyme catalyses cytidine(1407) in 16S rRNA + S-adenosyl-L-methionine = 5-methylcytidine(1407) in 16S rRNA + S-adenosyl-L-homocysteine + H(+). Functionally, specifically methylates the cytosine at position 1407 (m5C1407) of 16S rRNA. The sequence is that of Ribosomal RNA small subunit methyltransferase F from Salmonella newport (strain SL254).